The following is a 271-amino-acid chain: uncharacterized protein (271 aa).

The next 3 helical transmembrane spans lie at 30-50 (IWFP…GMLL), 189-209 (ALAA…YFLI), and 218-238 (FLVT…IFAC).

Its subcellular location is the cell membrane. This is an uncharacterized protein from Aquifex aeolicus (strain VF5).